Consider the following 256-residue polypeptide: Acetylglutamate kinase (256 aa).

Substrate-binding positions include 40-41 (GG), arginine 62, and asparagine 154.

Belongs to the acetylglutamate kinase family. ArgB subfamily.

It localises to the cytoplasm. The enzyme catalyses N-acetyl-L-glutamate + ATP = N-acetyl-L-glutamyl 5-phosphate + ADP. It functions in the pathway amino-acid biosynthesis; L-arginine biosynthesis; N(2)-acetyl-L-ornithine from L-glutamate: step 2/4. Functionally, catalyzes the ATP-dependent phosphorylation of N-acetyl-L-glutamate. The protein is Acetylglutamate kinase of Staphylococcus aureus (strain bovine RF122 / ET3-1).